The sequence spans 157 residues: Phosphopantetheine adenylyltransferase (157 aa).

T8 serves as a coordination point for substrate. Residues 8-9 and H16 each bind ATP; that span reads TF. Residues K40, T72, and R86 each coordinate substrate. ATP is bound by residues 87-89, E97, and 122-128; these read GLR and YSFLSSS.

This sequence belongs to the bacterial CoaD family. Homohexamer. Mg(2+) is required as a cofactor.

It localises to the cytoplasm. It catalyses the reaction (R)-4'-phosphopantetheine + ATP + H(+) = 3'-dephospho-CoA + diphosphate. It functions in the pathway cofactor biosynthesis; coenzyme A biosynthesis; CoA from (R)-pantothenate: step 4/5. In terms of biological role, reversibly transfers an adenylyl group from ATP to 4'-phosphopantetheine, yielding dephospho-CoA (dPCoA) and pyrophosphate. The polypeptide is Phosphopantetheine adenylyltransferase (Prochlorococcus marinus (strain MIT 9312)).